A 543-amino-acid chain; its full sequence is NXPE family member 4 (543 aa).

The N-terminal stretch at 1 to 26 is a signal peptide; it reads MKTLASRKSLWMLLFIVIFWVSFTVF. 3 N-linked (GlcNAc...) asparagine glycosylation sites follow: N91, N159, and N223.

The protein belongs to the NXPE family.

The protein localises to the secreted. In Mus musculus (Mouse), this protein is NXPE family member 4 (Nxpe4).